Reading from the N-terminus, the 307-residue chain is Ornithine carbamoyltransferase (307 aa).

Carbamoyl phosphate-binding positions include 50 to 53 (STRT), glutamine 77, arginine 101, and 128 to 131 (HPCQ). L-ornithine contacts are provided by residues asparagine 160, aspartate 224, and 228–229 (SM). Residues 264-265 (CL) and arginine 292 each bind carbamoyl phosphate.

It belongs to the aspartate/ornithine carbamoyltransferase superfamily. OTCase family. As to quaternary structure, homotrimer.

The protein resides in the cytoplasm. It carries out the reaction carbamoyl phosphate + L-ornithine = L-citrulline + phosphate + H(+). The protein operates within amino-acid biosynthesis; L-arginine biosynthesis; L-arginine from L-ornithine and carbamoyl phosphate: step 1/3. Functionally, reversibly catalyzes the transfer of the carbamoyl group from carbamoyl phosphate (CP) to the N(epsilon) atom of ornithine (ORN) to produce L-citrulline, which is a substrate for argininosuccinate synthetase, the enzyme involved in the final step in arginine biosynthesis. This is Ornithine carbamoyltransferase (argF) from Mycobacterium bovis (strain ATCC BAA-935 / AF2122/97).